The following is a 466-amino-acid chain: Asparagine--tRNA ligase (466 aa).

It belongs to the class-II aminoacyl-tRNA synthetase family. Homodimer.

The protein resides in the cytoplasm. It catalyses the reaction tRNA(Asn) + L-asparagine + ATP = L-asparaginyl-tRNA(Asn) + AMP + diphosphate + H(+). In Yersinia enterocolitica serotype O:8 / biotype 1B (strain NCTC 13174 / 8081), this protein is Asparagine--tRNA ligase.